A 227-amino-acid chain; its full sequence is Transcriptional regulatory protein CpxR homolog (227 aa).

A Response regulatory domain is found at 3–115 (KLLLVDDDIE…ELIARIKAIL (113 aa)). Asp-51 carries the post-translational modification 4-aspartylphosphate. Positions 128 to 227 (VEILSFDGIT…LRGKGYALVT (100 aa)) form a DNA-binding region, ompR/PhoB-type.

Phosphorylated.

The protein resides in the cytoplasm. Its function is as follows. Member of a two-component regulatory system. The chain is Transcriptional regulatory protein CpxR homolog (cpxR) from Haemophilus influenzae (strain ATCC 51907 / DSM 11121 / KW20 / Rd).